The primary structure comprises 184 residues: UPF0397 protein SA2477 (184 aa).

The next 5 helical transmembrane spans lie at 11 to 31 (VVAI…VVIP), 44 to 64 (AFLA…TGLV), 77 to 97 (AWWS…WIGL), 111 to 131 (MIYF…LIAP), and 148 to 168 (QGVI…TILL).

Belongs to the UPF0397 family.

The protein localises to the cell membrane. The chain is UPF0397 protein SA2477 from Staphylococcus aureus (strain N315).